The sequence spans 318 residues: Transaldolase (318 aa).

Residue K132 is the Schiff-base intermediate with substrate of the active site.

Belongs to the transaldolase family. Type 1 subfamily. As to quaternary structure, homodimer.

It localises to the cytoplasm. The enzyme catalyses D-sedoheptulose 7-phosphate + D-glyceraldehyde 3-phosphate = D-erythrose 4-phosphate + beta-D-fructose 6-phosphate. It participates in carbohydrate degradation; pentose phosphate pathway; D-glyceraldehyde 3-phosphate and beta-D-fructose 6-phosphate from D-ribose 5-phosphate and D-xylulose 5-phosphate (non-oxidative stage): step 2/3. Functionally, transaldolase is important for the balance of metabolites in the pentose-phosphate pathway. The protein is Transaldolase of Shewanella baltica (strain OS223).